The primary structure comprises 438 residues: UDP-N-acetylmuramoylalanine--D-glutamate ligase (438 aa).

112–118 (GSNGKST) lines the ATP pocket.

It belongs to the MurCDEF family.

The protein localises to the cytoplasm. The catalysed reaction is UDP-N-acetyl-alpha-D-muramoyl-L-alanine + D-glutamate + ATP = UDP-N-acetyl-alpha-D-muramoyl-L-alanyl-D-glutamate + ADP + phosphate + H(+). It participates in cell wall biogenesis; peptidoglycan biosynthesis. In terms of biological role, cell wall formation. Catalyzes the addition of glutamate to the nucleotide precursor UDP-N-acetylmuramoyl-L-alanine (UMA). This chain is UDP-N-acetylmuramoylalanine--D-glutamate ligase, found in Pectobacterium atrosepticum (strain SCRI 1043 / ATCC BAA-672) (Erwinia carotovora subsp. atroseptica).